The sequence spans 570 residues: Formate--tetrahydrofolate ligase (570 aa).

65–72 is a binding site for ATP; it reads TPYGEGKT.

The protein belongs to the formate--tetrahydrofolate ligase family.

It carries out the reaction (6S)-5,6,7,8-tetrahydrofolate + formate + ATP = (6R)-10-formyltetrahydrofolate + ADP + phosphate. Its pathway is one-carbon metabolism; tetrahydrofolate interconversion. The protein is Formate--tetrahydrofolate ligase of Shewanella piezotolerans (strain WP3 / JCM 13877).